Reading from the N-terminus, the 316-residue chain is MLKSNKVVLIGAGGVGSSFAYALTIDNSLVHELVIIDVNENKAKGEVMDLNHGQMFLKKNINVLFGTYKDCINADIVVITAGLNQKPSETRLDLVDKNSEIFKDIITNVVSSGFDGIFVIASNPVDIMTYVTMKYSKFPIHKVIGTGTILDTSRLRYFLSDRLNVNTQNIHSYIMGEHGDSSFATWDETKIAMKPLSEYLAEGKITEIELDEIHKKVVNAAYEVIKLKGATYYAIGLGIKNIVNAIIGDQNIILPISSYINGQYGGLVKDIYIGAPAIVCKEGVKEVLNFKISPKELEKFNSSANQLKSYIDKIEF.

NAD(+) contacts are provided by residues Val-15, Asp-37, Lys-42, Tyr-68, and 82–83 (GL). Residues Gln-85, Arg-91, and 123 to 126 (NPVD) each bind substrate. NAD(+) is bound by residues 121-123 (ASN) and Thr-146. 151-154 (DTSR) contributes to the substrate binding site. Positions 156 and 171 each coordinate beta-D-fructose 1,6-bisphosphate. His-178 (proton acceptor) is an active-site residue. A Phosphotyrosine modification is found at Tyr-222. Thr-231 provides a ligand contact to substrate.

This sequence belongs to the LDH/MDH superfamily. LDH family. As to quaternary structure, homotetramer.

It is found in the cytoplasm. It catalyses the reaction (S)-lactate + NAD(+) = pyruvate + NADH + H(+). Its pathway is fermentation; pyruvate fermentation to lactate; (S)-lactate from pyruvate: step 1/1. Its activity is regulated as follows. Allosterically activated by fructose 1,6-bisphosphate (FBP). Functionally, catalyzes the conversion of lactate to pyruvate. The chain is L-lactate dehydrogenase from Borrelia garinii subsp. bavariensis (strain ATCC BAA-2496 / DSM 23469 / PBi) (Borreliella bavariensis).